Consider the following 103-residue polypeptide: MYAIIETGGKQFRVEEGLELNVQKMDAEAGTKVDLDKILLIGQGEDVKIGAPYVEGAKVSCTVVEHGRDKKIVVFKKRRRKDSQTKQGHRQDYTRIKVEAIQA.

The protein belongs to the bacterial ribosomal protein bL21 family. Part of the 50S ribosomal subunit. Contacts protein L20.

Its function is as follows. This protein binds to 23S rRNA in the presence of protein L20. In Maridesulfovibrio salexigens (strain ATCC 14822 / DSM 2638 / NCIMB 8403 / VKM B-1763) (Desulfovibrio salexigens), this protein is Large ribosomal subunit protein bL21.